The primary structure comprises 343 residues: Protein RecA (343 aa).

ATP is bound at residue 66 to 73; the sequence is GPESSGKT.

The protein belongs to the RecA family.

The protein resides in the cytoplasm. In terms of biological role, can catalyze the hydrolysis of ATP in the presence of single-stranded DNA, the ATP-dependent uptake of single-stranded DNA by duplex DNA, and the ATP-dependent hybridization of homologous single-stranded DNAs. It interacts with LexA causing its activation and leading to its autocatalytic cleavage. This is Protein RecA from Nitrosomonas eutropha (strain DSM 101675 / C91 / Nm57).